The chain runs to 130 residues: Cystatin domain-containing protein 1 (130 aa).

The signal sequence occupies residues 1 to 23 (MSWKVPMLVGLVVLGTHIWTINK). Residues 37-116 (ASVEFAVAQF…CVFQVDARPW (80 aa)) form the Cystatin domain. Intrachain disulfides connect cysteine 84-cysteine 94 and cysteine 107-cysteine 127.

This sequence belongs to the cystatin family.

It localises to the secreted. Its function is as follows. May play a specialized role in spermatogenesis. In Rattus norvegicus (Rat), this protein is Cystatin domain-containing protein 1.